A 145-amino-acid polypeptide reads, in one-letter code: AP-2 complex subunit sigma (145 aa).

Belongs to the adaptor complexes small subunit family. As to quaternary structure, adaptor protein complex 2 (AP-2) is a heterotetramer composed of two large adaptins (alpha-type subunit apl3 and beta-type subunit apl1), a medium chain (mu-type subunit apm4) and a small adaptin (sigma-type subunit aps2).

The protein localises to the cell membrane. It localises to the membrane. Its subcellular location is the coated pit. In terms of biological role, component of the adaptor complexes which link clathrin to receptors in coated vesicles. Clathrin-associated protein complexes are believed to interact with the cytoplasmic tails of membrane proteins, leading to their selection and concentration. The chain is AP-2 complex subunit sigma (aps2) from Aspergillus fumigatus (strain ATCC MYA-4609 / CBS 101355 / FGSC A1100 / Af293) (Neosartorya fumigata).